A 359-amino-acid chain; its full sequence is Ferredoxin--NADP reductase (359 aa).

FAD-binding residues include Asp48, Gln56, Tyr61, Ala101, Phe139, Asp304, and Ser345.

Belongs to the ferredoxin--NADP reductase type 2 family. In terms of assembly, homodimer. The cofactor is FAD.

It catalyses the reaction 2 reduced [2Fe-2S]-[ferredoxin] + NADP(+) + H(+) = 2 oxidized [2Fe-2S]-[ferredoxin] + NADPH. The protein is Ferredoxin--NADP reductase of Ralstonia pickettii (strain 12J).